The sequence spans 304 residues: Ribonuclease HII (304 aa).

A disordered region spans residues 1-53; it reads MIRDTKQPIKVPAKPASRSGGKAKTVKPKTVKPKAVKAADGKAASAKASTSKA. Residues 24-35 show a composition bias toward basic residues; sequence KTVKPKTVKPKA. Residues 36 to 53 are compositionally biased toward low complexity; the sequence is VKAADGKAASAKASTSKA. Positions 96 to 284 constitute an RNase H type-2 domain; the sequence is WPIAGCDEAG…VAAAWQKIEG (189 aa). 3 residues coordinate a divalent metal cation: Asp102, Glu103, and Asp193.

This sequence belongs to the RNase HII family. It depends on Mn(2+) as a cofactor. The cofactor is Mg(2+).

It is found in the cytoplasm. It catalyses the reaction Endonucleolytic cleavage to 5'-phosphomonoester.. Endonuclease that specifically degrades the RNA of RNA-DNA hybrids. This is Ribonuclease HII from Rhodopseudomonas palustris (strain ATCC BAA-98 / CGA009).